A 241-amino-acid polypeptide reads, in one-letter code: MTLPIHFPRCVLYGMASAVWSILFLHILVGDTMSAADALSWSGGLIHSPAHRVNVMRSHHHEMGKELEQQHGGEEQQMQRDTKPAAFSNPPHLATGRGPSFVHADGQLDVSCFPHDKNIGSRTTEVAVVQVSSVQDCMKQCQSRPTCSHFTYNKNSKKCHLKDGAPVFYTYTGDMTGPRSCEHTCTDNCWMHSGNPLGTFQYSGHAPAFCWAACKGTAGCVMYTFQGGVCKLYSKNSVERA.

A signal peptide spans 1 to 34 (MTLPIHFPRCVLYGMASAVWSILFLHILVGDTMS). A propeptide spanning residues 35-103 (AADALSWSGG…ATGRGPSFVH (69 aa)) is cleaved from the precursor. Positions 64-83 (GKELEQQHGGEEQQMQRDTK) are enriched in basic and acidic residues. The tract at residues 64-90 (GKELEQQHGGEEQQMQRDTKPAAFSNP) is disordered. PAN domains lie at 112 to 181 (CFPH…PRSC) and 185 to 241 (CTDN…VERA). Intrachain disulfides connect cysteine 112-cysteine 181, cysteine 137-cysteine 159, cysteine 141-cysteine 147, cysteine 185-cysteine 189, cysteine 210-cysteine 230, and cysteine 214-cysteine 220. Serine 121 serves as a coordination point for a carbohydrate. Lysine 162, tyrosine 169, and aspartate 174 together coordinate a carbohydrate.

This sequence belongs to the microneme antigen family. Homodimer or heterodimer of major microneme antigen and microneme antigen. Contains six disulfide bonds.

The protein resides in the cytoplasmic vesicle. The protein localises to the secretory vesicle. It is found in the microneme. Functionally, galactose-binding lectin. Plays a role in adhesion to the host cell. Has a potential role in invasion of host cells. The polypeptide is Major microneme antigen (Sarcocystis muris).